The sequence spans 61 residues: MLQISNLLLAADFSAEVANNSAVGMIGSFIAAALLIVIPATAFLIFVSQKDSLDRTSTGRR.

Residues 26–46 traverse the membrane as a helical segment; sequence IGSFIAAALLIVIPATAFLIF.

It belongs to the PsbX family. Type 2 subfamily. PSII consists of a core antenna complex that captures photons, and an electron transfer chain that converts photonic excitation into a charge separation. PSII forms dimeric complexes.

It localises to the cellular thylakoid membrane. Functionally, involved in the binding and/or turnover of quinones at the Q(B) site of Photosystem II. This chain is Photosystem II reaction center X protein, found in Prochlorococcus marinus (strain MIT 9301).